The following is a 126-amino-acid chain: Fluoride-specific ion channel FluC (126 aa).

A run of 4 helical transmembrane segments spans residues 4–24 (YLYIAAGGAAGSLCRYLVSGV), 35–55 (IGTFSVNMIGCLFFGLVTGLF), 67–87 (LLILTGFMGAFTTFSTYMFES), and 100–120 (ALNIGGQSILGFACIVGGLAL). The Na(+) site is built by G75 and T78.

The protein belongs to the fluoride channel Fluc/FEX (TC 1.A.43) family.

The protein resides in the cell inner membrane. The catalysed reaction is fluoride(in) = fluoride(out). With respect to regulation, na(+) is not transported, but it plays an essential structural role and its presence is essential for fluoride channel function. Its function is as follows. Fluoride-specific ion channel. Important for reducing fluoride concentration in the cell, thus reducing its toxicity. This chain is Fluoride-specific ion channel FluC, found in Maridesulfovibrio salexigens (strain ATCC 14822 / DSM 2638 / NCIMB 8403 / VKM B-1763) (Desulfovibrio salexigens).